A 701-amino-acid polypeptide reads, in one-letter code: Elongation factor G 2 (701 aa).

Positions 8 to 291 (ERYRNIGISA…AVIDYLPSPA (284 aa)) constitute a tr-type G domain. GTP contacts are provided by residues 17–24 (AHIDAGKT), 88–92 (DTPGH), and 142–145 (NKMD).

This sequence belongs to the TRAFAC class translation factor GTPase superfamily. Classic translation factor GTPase family. EF-G/EF-2 subfamily.

The protein localises to the cytoplasm. In terms of biological role, catalyzes the GTP-dependent ribosomal translocation step during translation elongation. During this step, the ribosome changes from the pre-translocational (PRE) to the post-translocational (POST) state as the newly formed A-site-bound peptidyl-tRNA and P-site-bound deacylated tRNA move to the P and E sites, respectively. Catalyzes the coordinated movement of the two tRNA molecules, the mRNA and conformational changes in the ribosome. This is Elongation factor G 2 from Burkholderia lata (strain ATCC 17760 / DSM 23089 / LMG 22485 / NCIMB 9086 / R18194 / 383).